Reading from the N-terminus, the 66-residue chain is Protein translocase subunit SecE (66 aa).

The chain crosses the membrane as a helical span at residues 34-54 (LVVIVAVFVFSLICLVLDYGI).

This sequence belongs to the SecE/SEC61-gamma family. In terms of assembly, component of the Sec protein translocase complex. Heterotrimer consisting of SecY, SecE and SecG subunits. The heterotrimers can form oligomers, although 1 heterotrimer is thought to be able to translocate proteins. Interacts with the ribosome. Interacts with SecDF, and other proteins may be involved. Interacts with SecA.

It localises to the cell inner membrane. Functionally, essential subunit of the Sec protein translocation channel SecYEG. Clamps together the 2 halves of SecY. May contact the channel plug during translocation. The polypeptide is Protein translocase subunit SecE (Rickettsia bellii (strain RML369-C)).